Here is a 91-residue protein sequence, read N- to C-terminus: uncharacterized protein (91 aa).

A run of 2 helical transmembrane segments spans residues 22 to 42 (WPVIAVGALAWLVAAVAAFVV) and 53 to 73 (VAGLATGLLGTTIFVWQLAAA).

The protein resides in the cell membrane. This is an uncharacterized protein from Mycobacterium bovis (strain ATCC BAA-935 / AF2122/97).